Consider the following 315-residue polypeptide: tRNA-dihydrouridine(16) synthase (315 aa).

FMN-binding positions include 7–9 (PME) and glutamine 68. Cysteine 98 functions as the Proton donor in the catalytic mechanism. Residues lysine 139, 199-201 (NGE), and 223-224 (GR) contribute to the FMN site.

Belongs to the Dus family. DusC subfamily. Requires FMN as cofactor.

The catalysed reaction is 5,6-dihydrouridine(16) in tRNA + NADP(+) = uridine(16) in tRNA + NADPH + H(+). The enzyme catalyses 5,6-dihydrouridine(16) in tRNA + NAD(+) = uridine(16) in tRNA + NADH + H(+). Functionally, catalyzes the synthesis of 5,6-dihydrouridine (D), a modified base found in the D-loop of most tRNAs, via the reduction of the C5-C6 double bond in target uridines. Specifically modifies U16 in tRNAs. The sequence is that of tRNA-dihydrouridine(16) synthase from Shewanella oneidensis (strain ATCC 700550 / JCM 31522 / CIP 106686 / LMG 19005 / NCIMB 14063 / MR-1).